Consider the following 68-residue polypeptide: Large ribosomal subunit protein uL29 (68 aa).

Belongs to the universal ribosomal protein uL29 family.

In Geobacillus sp. (strain WCH70), this protein is Large ribosomal subunit protein uL29.